Consider the following 332-residue polypeptide: Packaging enzyme P4 (332 aa).

The tract at residues 111-138 (RWPSEGIYSGVTALMGATGSGKSITLNE) is involved in the regulation and mechanisms of transcription, replication and genome packaging. ATP is bound at residue 126–133 (GATGSGKS). Positions 310–332 (LERGSVDTDDRNSAPRRGANFSL) are disordered. Residues 313-322 (GSVDTDDRNS) are compositionally biased toward basic and acidic residues.

Homohexamer. Part of the packaging complex composed of RDRP, P4 and P7.

It localises to the virion. It catalyses the reaction a ribonucleoside 5'-triphosphate + H2O = a ribonucleoside 5'-diphosphate + phosphate + H(+). In terms of biological role, packaging motor with helicase and translocase activities. Part of the packaging complex that packages the viral RNA segments, replicate them into a double-stranded form and transcribe them. is one of the structural proteins of the polyhedral procapsid, which is responsible for genomic replication and transcription. Displays single-stranded RNA-stimulated NTPase activity. This chain is Packaging enzyme P4 (P4), found in Pseudomonas savastanoi pv. phaseolicola (Pseudomonas syringae pv. phaseolicola).